We begin with the raw amino-acid sequence, 629 residues long: tRNA uridine 5-carboxymethylaminomethyl modification enzyme MnmG (629 aa).

13–18 (GGGHAG) is an FAD binding site. 273-287 (GPRYCPSIEDKIVRF) contributes to the NAD(+) binding site.

Belongs to the MnmG family. In terms of assembly, homodimer. Heterotetramer of two MnmE and two MnmG subunits. It depends on FAD as a cofactor.

Its subcellular location is the cytoplasm. Functionally, NAD-binding protein involved in the addition of a carboxymethylaminomethyl (cmnm) group at the wobble position (U34) of certain tRNAs, forming tRNA-cmnm(5)s(2)U34. This Pseudoalteromonas translucida (strain TAC 125) protein is tRNA uridine 5-carboxymethylaminomethyl modification enzyme MnmG.